Reading from the N-terminus, the 233-residue chain is Ras-related protein RabV (233 aa).

GTP is bound at residue 15-22; sequence GEKEVGKS. An Effector region motif is present at residues 37 to 45; the sequence is YIPTIGIDF. Residues 63-67 and 122-125 contribute to the GTP site; these read DYVSH and TKSD. Positions 143-182 are disordered; sequence QNNNNNNNNNNNNNNNNNNNNNNNNNNNNNSNNNNNNNLQ. Low complexity predominate over residues 144 to 180; the sequence is NNNNNNNNNNNNNNNNNNNNNNNNNNNNNSNNNNNNN.

The protein belongs to the small GTPase superfamily. Rab family.

This is Ras-related protein RabV (rabV) from Dictyostelium discoideum (Social amoeba).